We begin with the raw amino-acid sequence, 616 residues long: Zinc metalloproteinase nas-36 (616 aa).

The N-terminal stretch at 1–21 is a signal peptide; that stretch reads MRRFCRLLFLNSLLSISICKA. Residues 22–125 constitute a propeptide that is removed on maturation; that stretch reads QNPAHLVADE…SKDKTKRLRR (104 aa). Positions 126–321 constitute a Peptidase M12A domain; that stretch reads SFVSDKTATW…VATINTAYCK (196 aa). Cystine bridges form between cysteine 168–cysteine 320, cysteine 191–cysteine 210, cysteine 324–cysteine 345, cysteine 347–cysteine 356, cysteine 367–cysteine 396, cysteine 424–cysteine 444, cysteine 518–cysteine 549, cysteine 522–cysteine 554, and cysteine 534–cysteine 539. Asparagine 173 is a glycosylation site (N-linked (GlcNAc...) asparagine). Zn(2+) is bound at residue histidine 218. Glutamate 219 is an active-site residue. Zn(2+) contacts are provided by histidine 222 and histidine 228. The EGF-like domain occupies 316 to 357; that stretch reads NTAYCKEECKSEKTECEYGGYMRPSKCSECLCPDGLGGEKCE. In terms of domain architecture, CUB spans 367–481; it reads CGGILELSDE…IGFKIQVRST (115 aa). The TSP type-1 domain occupies 506 to 555; sequence PNVWADWGEWSMCSRTCGGCGIRSRVRSCRSKKCEGRRQEFGTCNLKACP.

Requires Zn(2+) as cofactor.

The protein resides in the secreted. Functionally, mtalloprotease. Involved in molting, a process during larval stages in which a new cuticle is formed and the old cuticle is shed. The chain is Zinc metalloproteinase nas-36 from Caenorhabditis briggsae.